A 411-amino-acid polypeptide reads, in one-letter code: Metal-binding regulatory protein cuf1 (411 aa).

A DNA-binding region (copper-fist) is located at residues 1 to 40 (MVVINNVKMACMKCIRGHRSSTCKHNDRELFPIRPKGRPI). 4 residues coordinate Zn(2+): Cys11, Cys14, Cys23, and His25. The tract at residues 63–92 (SRKKGSKCSTSSTTDLDSSSASNSSCSIPS) is disordered. Low complexity predominate over residues 69–92 (KCSTSSTTDLDSSSASNSSCSIPS).

It is found in the cytoplasm. It localises to the nucleus. In terms of biological role, copper-sensing transcription factor that regulates iron uptake genes. Under copper starvation conditions activates the transcription of the copper transport genes, ctr4, ctr5 and ctr6. This is Metal-binding regulatory protein cuf1 (cuf1) from Schizosaccharomyces pombe (strain 972 / ATCC 24843) (Fission yeast).